Consider the following 214-residue polypeptide: Cytochrome b (214 aa).

Transmembrane regions (helical) follow at residues 31-51 (FGSM…FLAI), 75-96 (WIMQ…YIHI), 111-131 (WLSG…GYVL), and 176-196 (FFAL…IHIL). Positions 81 and 95 each coordinate heme b. Heme b contacts are provided by H180 and H194. H199 serves as a coordination point for a ubiquinone.

Belongs to the cytochrome b family. As to quaternary structure, the cytochrome bc1 complex contains 3 respiratory subunits (MT-CYB, CYC1 and UQCRFS1), 2 core proteins (UQCRC1 and UQCRC2) and probably 6 low-molecular weight proteins. It depends on heme b as a cofactor.

It localises to the mitochondrion inner membrane. Functionally, component of the ubiquinol-cytochrome c reductase complex (complex III or cytochrome b-c1 complex) that is part of the mitochondrial respiratory chain. The b-c1 complex mediates electron transfer from ubiquinol to cytochrome c. Contributes to the generation of a proton gradient across the mitochondrial membrane that is then used for ATP synthesis. The sequence is that of Cytochrome b (MT-CYB) from Bothrops bilineatus (Green jararaca).